The sequence spans 1033 residues: MKKVDVKESAVGRETRIRKQWNEQSIFEQSIQNREGAQSFVFYEGPPTANGLPHVGHALGRTIKDVVARYKTMVGYKVLRKAGWDTHGLPVELGVEKQLGISGKHEIEEYGIEPFIQKCKESVFTYEKQWREFTESIGYWVDMDDPYVTLENPYIESVWHILGTIHEKGLLYKGHRVSPYCPSCQTSLSSHEVAQGYKTVKDLSATVKFEVKDSENEYFLGWTTTPWTLPANVALAVHPNMEYVKAKQEGHVYIVAKERVQDVLKEDYEVLSVHKGEELVNTSYMPPFPMKEVTNGYHVIAADFVTADSGTGLVHIAPAYGEDDYRVVQSEGLSFLHVVDEKGEYTEAVPFLKGKFVKDCDVDIVRYLAKEGLLYHKEKYEHSYPHCWRCDSPLLYYAGESWLIRTTAIKDTFLQNNDSVTWYPDHMKHGRFGKFLENMVDWNISRNRYWGTPLNVWECESCDHQFAPKSIADLRKHSTKETPEDLELHKPYVDEVQVCCEKCGGTMTRTPEVIDVWFDSGSMPFAQYHYPFENKELFEEQFPADVIAEGIDQTRGWFYSLLAVSALYTGKAPYKRVLSLGHVLDEEGQKMSKSKGNALDPVDLVEKFGADALRWALLVDSAPWNAKRFSERTVLEAKSKFVDTLINVYSFYVLYANLDEYNPHETYDVKRTKLDEWVLSRLHSTTKKVRTALDDYQFTNAAREIAALVDEVSNWYVRRSRNRFWESGMNAEKAAAYETLHEVLVTISKLIAPFTPFVAEDIHVNLTGNSVHLEDYPVVNESLLQPKLEAEMNAVLQVVELGRSNRNQHSLKVKQPLAELVLLEHNENDMDWESYRDIVMDELNVKTFHVELDETKYTSYQLKLNFKKAGPKFGKNVNAVNGWLKQLSQAEVQNFVSTERAVYEVASGEEVVVTAEDVMVEKVAKSGFSNTTNGQYTVMLDTNVTEELLQEGVAREFIRAVQEYRKQLNLPVNLRVDVILDTEEELQQTLTNHKELLKENLLVKQFTFGHLTNEDDELSLGETKVRIKLSSAN.

The 'HIGH' region motif lies at 47-57 (PTANGLPHVGH). Residues 590 to 594 (KMSKS) carry the 'KMSKS' region motif. Lysine 593 contacts ATP.

The protein belongs to the class-I aminoacyl-tRNA synthetase family. IleS type 2 subfamily. As to quaternary structure, monomer. The cofactor is Zn(2+).

The protein resides in the cytoplasm. The enzyme catalyses tRNA(Ile) + L-isoleucine + ATP = L-isoleucyl-tRNA(Ile) + AMP + diphosphate. Catalyzes the attachment of isoleucine to tRNA(Ile). As IleRS can inadvertently accommodate and process structurally similar amino acids such as valine, to avoid such errors it has two additional distinct tRNA(Ile)-dependent editing activities. One activity is designated as 'pretransfer' editing and involves the hydrolysis of activated Val-AMP. The other activity is designated 'posttransfer' editing and involves deacylation of mischarged Val-tRNA(Ile). This Bacillus thuringiensis (strain Al Hakam) protein is Isoleucine--tRNA ligase.